A 217-amino-acid chain; its full sequence is Ribulose-phosphate 3-epimerase (217 aa).

Substrate is bound at residue Ser-7. His-32, Asp-34, and His-65 together coordinate a divalent metal cation. Residue Asp-34 is the Proton acceptor of the active site. Residues His-65, 141–144 (GFGG), 175–177 (DGG), and 197–198 (GS) contribute to the substrate site. Asp-175 contributes to the a divalent metal cation binding site. Asp-175 (proton donor) is an active-site residue.

Belongs to the ribulose-phosphate 3-epimerase family. A divalent metal cation serves as cofactor.

It carries out the reaction D-ribulose 5-phosphate = D-xylulose 5-phosphate. Its pathway is carbohydrate degradation. In terms of biological role, catalyzes the reversible epimerization of D-ribulose 5-phosphate to D-xylulose 5-phosphate. The polypeptide is Ribulose-phosphate 3-epimerase (Bacillus subtilis (strain 168)).